A 466-amino-acid chain; its full sequence is Muscarinic acetylcholine receptor M2 (466 aa).

At 1–22 the chain is on the extracellular side; sequence MNNSTNSSNNSLALTSPYKTFE. N-linked (GlcNAc...) asparagine glycosylation is found at asparagine 2, asparagine 3, asparagine 6, and asparagine 9. Residues 23–45 form a helical membrane-spanning segment; that stretch reads VVFIVLVAGSLSLVTIIGNILVM. Residues 46-59 are Cytoplasmic-facing; it reads VSIKVNRHLQTVNN. The helical transmembrane segment at 60–80 threads the bilayer; the sequence is YFLFSLACADLIIGVFSMNLY. Residues 81 to 97 lie on the Extracellular side of the membrane; that stretch reads TLYTVIGYWPLGPVVCD. The cysteines at positions 96 and 176 are disulfide-linked. A helical transmembrane segment spans residues 98–119; sequence LWLALDYVVSNASVMNLLIISF. Residues 120–122 carry the Important for signaling motif; the sequence is DRY. Over 120-139 the chain is Cytoplasmic; it reads DRYFCVTKPLTYPVKRTTKM. A helical transmembrane segment spans residues 140 to 162; that stretch reads AGMMIAAAWVLSFILWAPAILFW. Topologically, residues 163-184 are extracellular; sequence QFIVGVRTVEDGECYIQFFSNA. Residues 185 to 209 traverse the membrane as a helical segment; it reads AVTFGTAIAAFYLPVIIMTVLYWHI. Residues 210–387 are Cytoplasmic-facing; that stretch reads SRASKSRIKK…PPSREKKVTR (178 aa). Residues 218-355 form a disordered region; sequence KKDKKEPVAN…VVGSSGQNGD (138 aa). Serine 232 carries the post-translational modification Phosphoserine. A compositionally biased stretch (basic and acidic residues) spans 254-270; the sequence is GLEHNKIQNGKAPRDPV. Polar residues-rich tracts occupy residues 284–293, 304–313, and 334–353; these read NDSTSVSAVA, DENTVSTSLG, and SDSCTPTNTTVEVVGSSGQN. Residues 388 to 410 form a helical membrane-spanning segment; it reads TILAILLAFIITWAPYNVMVLIN. Over 411–418 the chain is Extracellular; it reads TFCAPCIP. Cysteine 413 and cysteine 416 are joined by a disulfide. The chain crosses the membrane as a helical span at residues 419 to 442; sequence NTVWTIGYWLCYINSTINPACYAL. Positions 436 to 440 match the Important for signaling motif; that stretch reads NPACY. The Cytoplasmic portion of the chain corresponds to 443-466; sequence CNATFKKTFKHLLMCHYKNIGATR. Phosphothreonine is present on residues threonine 446, threonine 450, and threonine 465.

This sequence belongs to the G-protein coupled receptor 1 family. Muscarinic acetylcholine receptor subfamily. CHRM2 sub-subfamily. Interacts with ARRB1 and ARRB2. Interacts with RACK1; the interaction regulates CHRM2 internalization. In terms of processing, phosphorylated in response to agonist treatment.

The protein resides in the cell membrane. It is found in the postsynaptic cell membrane. Its function is as follows. The muscarinic acetylcholine receptor mediates various cellular responses, including inhibition of adenylate cyclase, breakdown of phosphoinositides and modulation of potassium channels through the action of G proteins. Primary transducing effect is adenylate cyclase inhibition. Signaling promotes phospholipase C activity, leading to the release of inositol trisphosphate (IP3); this then triggers calcium ion release into the cytosol. This is Muscarinic acetylcholine receptor M2 (CHRM2) from Homo sapiens (Human).